Here is a 307-residue protein sequence, read N- to C-terminus: Nucleotide-binding protein Sca_0414 (307 aa).

19–26 (GMSGAGKS) is an ATP binding site. Residue 70-73 (DLRG) participates in GTP binding.

It belongs to the RapZ-like family.

In terms of biological role, displays ATPase and GTPase activities. The protein is Nucleotide-binding protein Sca_0414 of Staphylococcus carnosus (strain TM300).